A 552-amino-acid chain; its full sequence is Arginine--tRNA ligase (552 aa).

The 'HIGH' region motif lies at 123–133 (ANPTGPLTIGR).

It belongs to the class-I aminoacyl-tRNA synthetase family. Monomer.

It is found in the cytoplasm. It catalyses the reaction tRNA(Arg) + L-arginine + ATP = L-arginyl-tRNA(Arg) + AMP + diphosphate. This chain is Arginine--tRNA ligase, found in Chlorobium luteolum (strain DSM 273 / BCRC 81028 / 2530) (Pelodictyon luteolum).